Reading from the N-terminus, the 78-residue chain is Acyl carrier protein (78 aa).

Residues 2-77 (STIEERVKKI…AAIDFINANQ (76 aa)) form the Carrier domain. Residue S37 is modified to O-(pantetheine 4'-phosphoryl)serine.

This sequence belongs to the acyl carrier protein (ACP) family. Post-translationally, 4'-phosphopantetheine is transferred from CoA to a specific serine of apo-ACP by AcpS. This modification is essential for activity because fatty acids are bound in thioester linkage to the sulfhydryl of the prosthetic group.

It is found in the cytoplasm. It participates in lipid metabolism; fatty acid biosynthesis. In terms of biological role, carrier of the growing fatty acid chain in fatty acid biosynthesis. This is Acyl carrier protein from Yersinia pseudotuberculosis serotype O:1b (strain IP 31758).